Here is an 85-residue protein sequence, read N- to C-terminus: Large ribosomal subunit protein bL27 (85 aa).

A disordered region spans residues 1–22 (MAHKKAGGSSRNGRDSESKRLG).

The protein belongs to the bacterial ribosomal protein bL27 family.

The protein is Large ribosomal subunit protein bL27 of Tolumonas auensis (strain DSM 9187 / NBRC 110442 / TA 4).